A 215-amino-acid polypeptide reads, in one-letter code: MRTGIIAQKIGMTSVFNDKGERIPLTLVKVDDCQVVGHKTLEKHGYNALVIGIKDKKISRVTKPMKQVFANAKISPKTKLKEFRISEGNFIDIAANLEVDHFMAGQFVDITATTIGKGFAGSMKRHNFRGLEASHGVSISHRSHGSTGQRQDPGKVFKGKKMAGHMGCNQVTIQNLKIFAVDRERKLIMIRGSIPGHKNSYLSIKDAVKKNSITV.

The segment at 136–161 (GVSISHRSHGSTGQRQDPGKVFKGKK) is disordered. N5-methylglutamine is present on Q151.

This sequence belongs to the universal ribosomal protein uL3 family. Part of the 50S ribosomal subunit. Forms a cluster with proteins L14 and L19. In terms of processing, methylated by PrmB.

In terms of biological role, one of the primary rRNA binding proteins, it binds directly near the 3'-end of the 23S rRNA, where it nucleates assembly of the 50S subunit. In Rickettsia akari (strain Hartford), this protein is Large ribosomal subunit protein uL3.